We begin with the raw amino-acid sequence, 47 residues long: Lysis protein for colicin E7 (47 aa).

The first 19 residues, 1-19 (MKKITGIILLLLAAIILAA), serve as a signal peptide directing secretion. Cys20 is lipidated: N-palmitoyl cysteine. Residue Cys20 is the site of S-diacylglycerol cysteine attachment.

It is found in the cell outer membrane. Its function is as follows. Lysis proteins are required for both colicin release and partial cell lysis. The sequence is that of Lysis protein for colicin E7 (lys) from Escherichia coli.